Reading from the N-terminus, the 112-residue chain is uncharacterized protein (112 aa).

The N-terminal stretch at Met1–Ser29 is a signal peptide. Asn84 is a glycosylation site (N-linked (GlcNAc...) asparagine). Residues Asn84 to His112 form a disordered region. Positions Glu94 to His112 are enriched in basic and acidic residues.

Its subcellular location is the secreted. This is an uncharacterized protein from Homo sapiens (Human).